Reading from the N-terminus, the 123-residue chain is Small ribosomal subunit protein uS12cz/uS12cy (123 aa).

This sequence belongs to the universal ribosomal protein uS12 family. Part of the 30S ribosomal subunit.

It is found in the plastid. The protein localises to the chloroplast. With S4 and S5 plays an important role in translational accuracy. Located at the interface of the 30S and 50S subunits. The polypeptide is Small ribosomal subunit protein uS12cz/uS12cy (rps12-A) (Coffea arabica (Arabian coffee)).